Here is a 185-residue protein sequence, read N- to C-terminus: ATP synthase subunit b 1 (185 aa).

The chain crosses the membrane as a helical span at residues 4 to 24 (TLAIALTLATTSPAFAAGGGW).

It belongs to the ATPase B chain family. As to quaternary structure, F-type ATPases have 2 components, F(1) - the catalytic core - and F(0) - the membrane proton channel. F(1) has five subunits: alpha(3), beta(3), gamma(1), delta(1), epsilon(1). F(0) has three main subunits: a(1), b(2) and c(10-14). The alpha and beta chains form an alternating ring which encloses part of the gamma chain. F(1) is attached to F(0) by a central stalk formed by the gamma and epsilon chains, while a peripheral stalk is formed by the delta and b chains.

Its subcellular location is the cell inner membrane. Functionally, f(1)F(0) ATP synthase produces ATP from ADP in the presence of a proton or sodium gradient. F-type ATPases consist of two structural domains, F(1) containing the extramembraneous catalytic core and F(0) containing the membrane proton channel, linked together by a central stalk and a peripheral stalk. During catalysis, ATP synthesis in the catalytic domain of F(1) is coupled via a rotary mechanism of the central stalk subunits to proton translocation. Its function is as follows. Component of the F(0) channel, it forms part of the peripheral stalk, linking F(1) to F(0). In Ruegeria sp. (strain TM1040) (Silicibacter sp.), this protein is ATP synthase subunit b 1.